Here is a 769-residue protein sequence, read N- to C-terminus: CO(2)-response secreted protease (769 aa).

The first 27 residues, 1-27, serve as a signal peptide directing secretion; the sequence is MKGITFFTPFLSFLYLLCILFMTETEA. The 74-residue stretch at 35-108 folds into the Inhibitor I9 domain; that stretch reads VYIVYMGSAS…VFPDPHFQLH (74 aa). In terms of domain architecture, Peptidase S8 spans 112–613; that stretch reads SWDFLKYQTS…AGELSSTASM (502 aa). Residues Asp145 and His210 each act as charge relay system in the active site. Residues 381–465 form the PA domain; sequence ADASEGSARA…SKEAAEIFSY (85 aa). Ser546 acts as the Charge relay system in catalysis.

It belongs to the peptidase S8 family. As to expression, expressed in roots, guard cells and meristemoid and pavement cells.

The protein localises to the secreted. The protein resides in the cell wall. It catalyses the reaction Release of an N-terminal tripeptide from a polypeptide.. Mediates CO(2)-controlled stomatal development by cleaving peptide EPF2 (AC Q8LC53). Not active on peptides EPF1 (AC Q8S8I4) or stomagen (AC Q9SV72). The sequence is that of CO(2)-response secreted protease from Arabidopsis thaliana (Mouse-ear cress).